Reading from the N-terminus, the 918-residue chain is Sarcosine dehydrogenase, mitochondrial (918 aa).

Residues 1-13 (MASLSRALRVAAA) show a composition bias toward low complexity. The transit peptide at 1 to 22 (MASLSRALRVAAAHPRQSPTRG) directs the protein to the mitochondrion. Residues 1-40 (MASLSRALRVAAAHPRQSPTRGMGPCNLSSAAGPTAEKSV) are disordered. N6-succinyllysine is present on Lys-38. The residue at position 108 (His-108) is a Tele-8alpha-FAD histidine. Position 173 is an N6-acetyllysine; alternate (Lys-173). The residue at position 173 (Lys-173) is an N6-succinyllysine; alternate. An N6-succinyllysine mark is found at Lys-377 and Lys-391. Residues Lys-559 and Lys-775 each carry the N6-acetyllysine modification. Tyr-777 bears the Phosphotyrosine mark. Residues Lys-802, Lys-884, and Lys-904 each carry the N6-acetyllysine; alternate modification. N6-succinyllysine; alternate is present on residues Lys-802, Lys-884, and Lys-904.

Belongs to the GcvT family. FAD serves as cofactor. Expressed in pancreas, liver and kidney.

Its subcellular location is the mitochondrion matrix. The enzyme catalyses (6S)-5,6,7,8-tetrahydrofolyl-(gamma-L-Glu)(n) + sarcosine + oxidized [electron-transfer flavoprotein] + H(+) = (6R)-5,10-methylenetetrahydrofolyl-(gamma-L-Glu)(n) + reduced [electron-transfer flavoprotein] + glycine. It participates in amine and polyamine degradation; sarcosine degradation; formaldehyde and glycine from sarcosine: step 1/1. Functionally, catalyzes the last step of the oxidative degradation of choline to glycine. Converts sarcosine into glycine. This is Sarcosine dehydrogenase, mitochondrial from Homo sapiens (Human).